A 321-amino-acid polypeptide reads, in one-letter code: Homoserine O-succinyltransferase (321 aa).

Catalysis depends on cysteine 142, which acts as the Acyl-thioester intermediate. Lysine 163 and serine 192 together coordinate substrate. Histidine 235 functions as the Proton acceptor in the catalytic mechanism. Residue glutamate 237 is part of the active site. Substrate is bound at residue arginine 249.

It belongs to the MetA family.

It is found in the cytoplasm. It catalyses the reaction L-homoserine + succinyl-CoA = O-succinyl-L-homoserine + CoA. It functions in the pathway amino-acid biosynthesis; L-methionine biosynthesis via de novo pathway; O-succinyl-L-homoserine from L-homoserine: step 1/1. In terms of biological role, transfers a succinyl group from succinyl-CoA to L-homoserine, forming succinyl-L-homoserine. The protein is Homoserine O-succinyltransferase of Shewanella loihica (strain ATCC BAA-1088 / PV-4).